The chain runs to 457 residues: Putative zinc finger CCCH domain-containing protein 21 (457 aa).

Disordered stretches follow at residues 51 to 73 (PTSS…ARAS), 102 to 130 (LESP…EKLL), 195 to 221 (TSPS…ERER), and 280 to 329 (RKQA…RLRV). The span at 57 to 66 (DGGGGGGGGY) shows a compositional bias: gly residues. A coiled-coil region spans residues 215–276 (ASAEREREVR…HLSLLLEELE (62 aa)). 2 C3H1-type zinc fingers span residues 382 to 409 (AAKT…HGLQ) and 419 to 447 (RYKT…HSPL).

This is Putative zinc finger CCCH domain-containing protein 21 from Oryza sativa subsp. japonica (Rice).